The following is a 384-amino-acid chain: 8-amino-7-oxononanoate synthase (384 aa).

Substrate is bound at residue arginine 21. Residue 108–109 (GF) participates in pyridoxal 5'-phosphate binding. Histidine 133 serves as a coordination point for substrate. The pyridoxal 5'-phosphate site is built by serine 179, histidine 207, and threonine 233. Lysine 236 carries the N6-(pyridoxal phosphate)lysine modification. Threonine 352 provides a ligand contact to substrate.

Belongs to the class-II pyridoxal-phosphate-dependent aminotransferase family. BioF subfamily. As to quaternary structure, homodimer. Pyridoxal 5'-phosphate is required as a cofactor.

The enzyme catalyses 6-carboxyhexanoyl-[ACP] + L-alanine + H(+) = (8S)-8-amino-7-oxononanoate + holo-[ACP] + CO2. Its pathway is cofactor biosynthesis; biotin biosynthesis. Catalyzes the decarboxylative condensation of pimeloyl-[acyl-carrier protein] and L-alanine to produce 8-amino-7-oxononanoate (AON), [acyl-carrier protein], and carbon dioxide. This is 8-amino-7-oxononanoate synthase from Escherichia coli (strain UTI89 / UPEC).